We begin with the raw amino-acid sequence, 430 residues long: Glutamate-1-semialdehyde 2,1-aminomutase (430 aa).

Residue K270 is modified to N6-(pyridoxal phosphate)lysine.

It belongs to the class-III pyridoxal-phosphate-dependent aminotransferase family. HemL subfamily. Homodimer. It depends on pyridoxal 5'-phosphate as a cofactor.

Its subcellular location is the cytoplasm. The catalysed reaction is (S)-4-amino-5-oxopentanoate = 5-aminolevulinate. It participates in porphyrin-containing compound metabolism; protoporphyrin-IX biosynthesis; 5-aminolevulinate from L-glutamyl-tRNA(Glu): step 2/2. The chain is Glutamate-1-semialdehyde 2,1-aminomutase from Cupriavidus necator (strain ATCC 17699 / DSM 428 / KCTC 22496 / NCIMB 10442 / H16 / Stanier 337) (Ralstonia eutropha).